The following is a 135-amino-acid chain: Large ribosomal subunit protein bL21 (135 aa).

Positions 109–128 are enriched in polar residues; the sequence is TLATAQSAPPSTSEATTDTT. The interval 109–135 is disordered; sequence TLATAQSAPPSTSEATTDTTGIPAAEE.

The protein belongs to the bacterial ribosomal protein bL21 family. Part of the 50S ribosomal subunit. Contacts protein L20.

Its function is as follows. This protein binds to 23S rRNA in the presence of protein L20. In Synechococcus sp. (strain JA-3-3Ab) (Cyanobacteria bacterium Yellowstone A-Prime), this protein is Large ribosomal subunit protein bL21.